A 122-amino-acid polypeptide reads, in one-letter code: Large ribosomal subunit protein uL14 (122 aa).

Belongs to the universal ribosomal protein uL14 family. As to quaternary structure, part of the 50S ribosomal subunit. Forms a cluster with proteins L3 and L19. In the 70S ribosome, L14 and L19 interact and together make contacts with the 16S rRNA in bridges B5 and B8.

Binds to 23S rRNA. Forms part of two intersubunit bridges in the 70S ribosome. The protein is Large ribosomal subunit protein uL14 of Bartonella quintana (strain Toulouse) (Rochalimaea quintana).